Here is a 70-residue protein sequence, read N- to C-terminus: DNA-directed RNA polymerase subunit epsilon (70 aa).

The protein belongs to the RNA polymerase subunit epsilon family. RNAP is composed of a core of 2 alpha, a beta and a beta' subunit. The core is associated with a delta subunit, and at least one of epsilon or omega. When a sigma factor is associated with the core the holoenzyme is formed, which can initiate transcription.

It catalyses the reaction RNA(n) + a ribonucleoside 5'-triphosphate = RNA(n+1) + diphosphate. Functionally, a non-essential component of RNA polymerase (RNAP). This is DNA-directed RNA polymerase subunit epsilon from Bacillus cytotoxicus (strain DSM 22905 / CIP 110041 / 391-98 / NVH 391-98).